We begin with the raw amino-acid sequence, 389 residues long: MPLENLEEEGLPKNPDLRIAQLRFLLSLPEHRGDAAVRDELMAAVRDNNMAPYYEALCKSLEWQMDVDLLNKMKKANEDELKRLDEELEDAEKNLGESEIRDAMMAKAEYLCRIGDKEGALTAFRRTYDKTVALGHRLDIVFYLLRIGLFYMDNDLITRNTEKAKSLIEEGGDWDRRNRLKVYQGLYCVAIRDFKQAAELFLDTVSTFTSYELMDYKTFVTYTVYVSMIALERPDLREKVIKGAEILEVLHSLPAVRQYLFSLYECRYSVFFQSLAIVEQEMKKDWLFAPHYRYYVREMRIHAYSQLLESYRSLTLGYMAEAFGVGVEFIDQELSRFIAAGRLHCKIDKVNEVVETNRPDSKNWQYQETIKKGGLLLNRVQKLSRVINM.

One can recognise a PCI domain in the interval 193 to 361; it reads DFKQAAELFL…EVVETNRPDS (169 aa).

It belongs to the proteasome subunit S10 family. As to quaternary structure, component of the 19S proteasome regulatory particle complex. The 26S proteasome consists of a 20S core particle (CP) and two 19S regulatory subunits (RP). The regulatory particle is made of a lid composed of 9 subunits including PSMD6, a base containing 6 ATPases and few additional components.

Its function is as follows. Component of the 26S proteasome, a multiprotein complex involved in the ATP-dependent degradation of ubiquitinated proteins. This complex plays a key role in the maintenance of protein homeostasis by removing misfolded or damaged proteins, which could impair cellular functions, and by removing proteins whose functions are no longer required. Therefore, the proteasome participates in numerous cellular processes, including cell cycle progression, apoptosis, or DNA damage repair. This Bos taurus (Bovine) protein is 26S proteasome non-ATPase regulatory subunit 6 (PSMD6).